The following is a 176-amino-acid chain: R-phycoerythrin beta chain (176 aa).

Residues Cys50 and Cys61 each contribute to the phycourobilin site. Asn72 is subject to N4-methylasparagine. (2R,3E)-phycoerythrobilin-binding residues include Cys82 and Cys158.

Belongs to the phycobiliprotein family. Heterodimer of an alpha and a beta chain. Contains two covalently linked phycoerythrobilin chromophores and one covalently linked phycourobilin chromophore.

The protein localises to the plastid. Its subcellular location is the chloroplast thylakoid membrane. Its function is as follows. Light-harvesting photosynthetic bile pigment-protein from the phycobiliprotein complex. The chain is R-phycoerythrin beta chain (cpeB) from Aglaothamnion neglectum (Red alga).